A 342-amino-acid chain; its full sequence is MSRQAKDDFLRHYTVSDPRTHPKGYTEYKVTAQFISKKDPEDVKEVVVWKRYSDFRKLHGDLAYTHRNLFRRLEEFPAFPRAQVFGRFEASVIEERRKGAEDLLRFTVHIPALNNSPQLKEFFRGGEVTRPLEVSRDLHILPPPLIPTPPPDDPRLSQLLPAERRGLEELEVPVDPPPSSPAQEALDLLFNCESTEEASGSPARGPLTEAELALFDPFSKEEGAAPSPTHVAELATMEVESARLDQEPWEPGGQEEEEDGEGGPTPAYLSQATELITQALRDEKAGAYAAALQGYRDGVHVLLQGVPSDPLPARQEGVKKKAAEYLKRAEEILRLHLSQLPP.

In terms of domain architecture, PX spans 1 to 130; sequence MSRQAKDDFL…EFFRGGEVTR (130 aa). Residues R51, S53, R87, and R96 each contribute to the a 1,2-diacyl-sn-glycero-3-phospho-(1D-myo-inositol-3-phosphate) site. The residue at position 105 (R105) is an Omega-N-methylarginine. Phosphoserine occurs at positions 201 and 227. The segment at 245–267 is disordered; the sequence is DQEPWEPGGQEEEEDGEGGPTPA. Residues 265 to 342 form the MIT domain; the sequence is TPAYLSQATE…LRLHLSQLPP (78 aa).

The protein belongs to the sorting nexin family. In terms of assembly, homodimer. Interacts with SNX1, SNX2 and SNX4. As to expression, widely expressed.

The protein localises to the cytoplasm. It localises to the membrane. It is found in the cytoplasmic vesicle membrane. Functionally, may be involved in several stages of intracellular trafficking. Overexpression of SNX15 disrupts the normal trafficking of proteins from the plasma membrane to recycling endosomes or the TGN. This is Sorting nexin-15 (SNX15) from Homo sapiens (Human).